A 787-amino-acid chain; its full sequence is DNA ligase (787 aa).

Residues 32-36, 81-82, and Glu121 contribute to the NAD(+) site; these read DVEYD and SL. The active-site N6-AMP-lysine intermediate is Lys123. The NAD(+) site is built by Arg144, Glu181, Lys297, and Lys321. Zn(2+) contacts are provided by Cys415, Cys418, Cys445, and Cys451. The BRCT domain occupies 703–787; it reads VEGLPLAGQT…RLIELGVAVD (85 aa).

It belongs to the NAD-dependent DNA ligase family. LigA subfamily. Requires Mg(2+) as cofactor. The cofactor is Mn(2+).

It carries out the reaction NAD(+) + (deoxyribonucleotide)n-3'-hydroxyl + 5'-phospho-(deoxyribonucleotide)m = (deoxyribonucleotide)n+m + AMP + beta-nicotinamide D-nucleotide.. Functionally, DNA ligase that catalyzes the formation of phosphodiester linkages between 5'-phosphoryl and 3'-hydroxyl groups in double-stranded DNA using NAD as a coenzyme and as the energy source for the reaction. It is essential for DNA replication and repair of damaged DNA. The polypeptide is DNA ligase (Pseudomonas syringae pv. syringae (strain B728a)).